The chain runs to 352 residues: Biotin synthase (352 aa).

The Radical SAM core domain maps to 44-262 (NRVQVSTLLS…LAVARLLMPK (219 aa)). Residues C59, C63, and C66 each coordinate [4Fe-4S] cluster. 4 residues coordinate [2Fe-2S] cluster: C103, C134, C194, and R266.

It belongs to the radical SAM superfamily. Biotin synthase family. As to quaternary structure, homodimer. The cofactor is [4Fe-4S] cluster. [2Fe-2S] cluster is required as a cofactor.

The enzyme catalyses (4R,5S)-dethiobiotin + (sulfur carrier)-SH + 2 reduced [2Fe-2S]-[ferredoxin] + 2 S-adenosyl-L-methionine = (sulfur carrier)-H + biotin + 2 5'-deoxyadenosine + 2 L-methionine + 2 oxidized [2Fe-2S]-[ferredoxin]. It participates in cofactor biosynthesis; biotin biosynthesis; biotin from 7,8-diaminononanoate: step 2/2. In terms of biological role, catalyzes the conversion of dethiobiotin (DTB) to biotin by the insertion of a sulfur atom into dethiobiotin via a radical-based mechanism. The polypeptide is Biotin synthase (Pseudomonas putida (strain W619)).